The primary structure comprises 86 residues: Co-chaperonin GroES (86 aa).

It belongs to the GroES chaperonin family. As to quaternary structure, heptamer of 7 subunits arranged in a ring. Interacts with the chaperonin GroEL.

Its subcellular location is the cytoplasm. Functionally, together with the chaperonin GroEL, plays an essential role in assisting protein folding. The GroEL-GroES system forms a nano-cage that allows encapsulation of the non-native substrate proteins and provides a physical environment optimized to promote and accelerate protein folding. GroES binds to the apical surface of the GroEL ring, thereby capping the opening of the GroEL channel. The chain is Co-chaperonin GroES from Campylobacter lari (strain RM2100 / D67 / ATCC BAA-1060).